Reading from the N-terminus, the 447-residue chain is Argininosuccinate synthase (447 aa).

ATP is bound by residues 17 to 25 (AFSGGLDTS) and Ala43. Position 99 (Tyr99) interacts with L-citrulline. ATP is bound by residues Gly129 and Thr131. 3 residues coordinate L-aspartate: Thr131, Asn135, and Asp136. L-citrulline is bound at residue Asn135. Position 136 (Asp136) interacts with ATP. The L-citrulline site is built by Arg139 and Ser192. Asp194 is an ATP binding site. 3 residues coordinate L-citrulline: Thr201, Glu203, and Glu280.

It belongs to the argininosuccinate synthase family. Type 2 subfamily. Homotetramer.

The protein localises to the cytoplasm. The catalysed reaction is L-citrulline + L-aspartate + ATP = 2-(N(omega)-L-arginino)succinate + AMP + diphosphate + H(+). It participates in amino-acid biosynthesis; L-arginine biosynthesis; L-arginine from L-ornithine and carbamoyl phosphate: step 2/3. The sequence is that of Argininosuccinate synthase from Salmonella dublin (strain CT_02021853).